Reading from the N-terminus, the 118-residue chain is uncharacterized protein (118 aa).

3 helical membrane passes run 22 to 44 (IIAS…FSIA), 54 to 71 (LSPL…PVLR), and 78 to 99 (PILS…VEWL).

It is found in the cell membrane. This is an uncharacterized protein from Archaeoglobus fulgidus (strain ATCC 49558 / DSM 4304 / JCM 9628 / NBRC 100126 / VC-16).